A 505-amino-acid polypeptide reads, in one-letter code: Protein disulfide-isomerase A3 (505 aa).

The first 24 residues, 1-24 (MRLRRLALFPGVALLLAAARLAAA), serve as a signal peptide directing secretion. One can recognise a Thioredoxin 1 domain in the interval 25-133 (SDVLELTDDN…IVSHLKKQAG (109 aa)). Active-site nucleophile residues include Cys57 and Cys60. The cysteines at positions 57 and 60 are disulfide-linked. An N6-methyllysine modification is found at Lys61. Residues Cys85 and Cys92 are joined by a disulfide bond. An N6-succinyllysine modification is found at Lys129. An N6-acetyllysine modification is found at Lys152. N6-succinyllysine is present on Lys218. Lys252 carries the N6-acetyllysine modification. Thr319 is subject to Phosphothreonine. The Thioredoxin 2 domain maps to 343–485 (SRDGKALERF…FISYLQREAT (143 aa)). Lys362 carries the post-translational modification N6-acetyllysine. Active-site nucleophile residues include Cys406 and Cys409. Cys406 and Cys409 are oxidised to a cystine. Residues 484-505 (ATNPPVIQEEKPKKKKKAQEDL) are disordered. A compositionally biased stretch (basic and acidic residues) spans 491–505 (QEEKPKKKKKAQEDL). The residue at position 494 (Lys494) is an N6-acetyllysine. The Prevents secretion from ER motif lies at 502–505 (QEDL).

Part of the major histocompatibility complex class I (MHC I) peptide loading complex composed of TAP1, TAP2, B2M, MHC heavy chain, TAPBP, PDIA3, and CALR. Interacts with ERP27 and CANX. Interacts with SERPINA2 and with the S and Z variants of SERPINA1. Interacts with ATP2A2. Within the major histocompatibility complex class I (MHC I) peptide loading complex forms reversible disulfide-linked heterodimers with TAPBP as part of its protein folding chaperone activity. This is essential to assist the dynamic assembly of the MHC I complex with high affinity antigens in the endoplasmic reticulum. Post-translationally, phosphorylated. Detected in the flagellum and head region of spermatozoa (at protein level). Expressed in liver, stomach and colon (at protein level). Expressed in gastric parietal cells and chief cells (at protein level).

Its subcellular location is the endoplasmic reticulum. The protein localises to the endoplasmic reticulum lumen. The protein resides in the melanosome. The catalysed reaction is Catalyzes the rearrangement of -S-S- bonds in proteins.. Its activity is regulated as follows. Association with calcitriol does not affect its enzymatic activity. Its function is as follows. Protein disulfide isomerase that catalyzes the formation, isomerization, and reduction or oxidation of disulfide bonds in client proteins and functions as a protein folding chaperone. Core component of the major histocompatibility complex class I (MHC I) peptide loading complex where it functions as an essential folding chaperone for TAPBP. Through TAPBP, assists the dynamic assembly of the MHC I complex with high affinity antigens in the endoplasmic reticulum. Therefore, plays a crucial role in the presentation of antigens to cytotoxic T cells in adaptive immunity. In Homo sapiens (Human), this protein is Protein disulfide-isomerase A3.